The sequence spans 438 residues: Glutamyl-tRNA(Gln) amidotransferase subunit D (438 aa).

The 331-residue stretch at 92 to 422 (PEVTIIGTGG…EEVRKMMLTN (331 aa)) folds into the Asparaginase/glutaminase domain. Active-site residues include Thr102, Thr178, Asp179, and Lys256.

This sequence belongs to the asparaginase 1 family. GatD subfamily. As to quaternary structure, heterodimer of GatD and GatE.

It catalyses the reaction L-glutamyl-tRNA(Gln) + L-glutamine + ATP + H2O = L-glutaminyl-tRNA(Gln) + L-glutamate + ADP + phosphate + H(+). Its function is as follows. Allows the formation of correctly charged Gln-tRNA(Gln) through the transamidation of misacylated Glu-tRNA(Gln) in organisms which lack glutaminyl-tRNA synthetase. The reaction takes place in the presence of glutamine and ATP through an activated gamma-phospho-Glu-tRNA(Gln). The GatDE system is specific for glutamate and does not act on aspartate. The polypeptide is Glutamyl-tRNA(Gln) amidotransferase subunit D (Pyrococcus abyssi (strain GE5 / Orsay)).